Reading from the N-terminus, the 628-residue chain is EF-hand calcium-binding domain-containing protein 7 (628 aa).

Over residues 1–22 the composition is skewed to polar residues; that stretch reads MASNPGSDAALGTQNPLLSGSP. A disordered region spans residues 1–24; it reads MASNPGSDAALGTQNPLLSGSPRT. EF-hand domains follow at residues 102–137 and 138–173; these read TSKAELLKSFKKLDVNDDGAILHSDLQKYLTKRGEK and MTQEEVNAVINLADINANGKFDYVKFCKLYMTTSEQ. The segment at 192-231 is disordered; sequence QFGSHMEGSPERGPSPAPKPSPRVIRKNDQETFSSKGDTS. Phosphoserine occurs at positions 200 and 212. Residues 222–231 are compositionally biased toward polar residues; sequence ETFSSKGDTS. The EF-hand 3 domain maps to 402 to 437; that stretch reads EFRSTLSEIFEVIDLDGNGLISLEEYNFFELRTSGE. Residues aspartate 415, aspartate 417, asparagine 419, and glutamate 426 each coordinate Ca(2+).

In terms of assembly, component of the EvC complex composed of EFCAB7, IQCE, EVC2 and EVC; built from two subcomplexes, EVC2:EVC and EFCAB7:IQCE. Interacts (via EF-hand 1 and 2) with IQCE (via N-terminus); this interaction anchors the EVC-EVC2 complex in a signaling microdomain at the base of cilia and stimulates the Hedgehog (Hh) pathway. Interacts with EVC2 (via N-terminal end). Interacts with EVC.

Its subcellular location is the cell projection. It is found in the cilium membrane. Its function is as follows. Component of the EvC complex that positively regulates ciliary Hedgehog (Hh) signaling. Required for the localization of the EVC2:EVC subcomplex at the base of primary cilia. This is EF-hand calcium-binding domain-containing protein 7 (Efcab7) from Mus musculus (Mouse).